The chain runs to 313 residues: MEKRKIILDCDPGHDDAIAIMMAAKHPAIDLLGITIVAGNQTLDKTLINGLNVCQKLEINVPVYAGMPQPIMRQQIVADNIHGETGLDGPVFEPLTRQAESTHAVKYIIDTLMASDGDITLVPVGPLSNIAVAMRMQPAILPKIREIVLMGGAYGTGNFTPSAEFNIFADPEAARVVFTSGVPLVMMGLDLTNQTVCTPDVIARMERAGGPAGELFSDIMNFTLKTQFENYGLAGGPVHDATCIGYLINPDGIKTQEMYVEVDVNSGPCYGRTVCDELGVLGKPANTKVGITIDTDWFWGLVEECVRGYIKTH.

Asp-11 (proton acceptor) is an active-site residue. Residues Asp-11, Asp-16, and Val-124 each coordinate Ca(2+). The substrate site is built by Gln-227 and His-239. Asp-240 contacts Ca(2+).

The protein belongs to the IUNH family. RihB subfamily. Homotetramer. The cofactor is Ca(2+).

The enzyme catalyses a pyrimidine ribonucleoside + H2O = a pyrimidine nucleobase + D-ribose. Functionally, hydrolyzes cytidine or uridine to ribose and cytosine or uracil, respectively. Has a clear preference for cytidine over uridine. Strictly specific for ribonucleosides. The protein is Pyrimidine-specific ribonucleoside hydrolase RihB of Escherichia coli (strain K12 / DH10B).